The chain runs to 38 residues: Photosystem II reaction center protein L (38 aa).

Residues 17 to 37 (SLYWGLLCIFVLAILFSSYFF) form a helical membrane-spanning segment.

It belongs to the PsbL family. In terms of assembly, PSII is composed of 1 copy each of membrane proteins PsbA, PsbB, PsbC, PsbD, PsbE, PsbF, PsbH, PsbI, PsbJ, PsbK, PsbL, PsbM, PsbT, PsbX, PsbY, PsbZ, Psb30/Ycf12, at least 3 peripheral proteins of the oxygen-evolving complex and a large number of cofactors. It forms dimeric complexes.

It localises to the plastid. The protein localises to the chloroplast thylakoid membrane. Its function is as follows. One of the components of the core complex of photosystem II (PSII). PSII is a light-driven water:plastoquinone oxidoreductase that uses light energy to abstract electrons from H(2)O, generating O(2) and a proton gradient subsequently used for ATP formation. It consists of a core antenna complex that captures photons, and an electron transfer chain that converts photonic excitation into a charge separation. This subunit is found at the monomer-monomer interface and is required for correct PSII assembly and/or dimerization. This Cyanidioschyzon merolae (strain NIES-3377 / 10D) (Unicellular red alga) protein is Photosystem II reaction center protein L.